Here is a 905-residue protein sequence, read N- to C-terminus: Stonin-2 (905 aa).

Disordered stretches follow at residues 1 to 121 (MTTL…HQET), 178 to 205 (EQTS…VEME), and 244 to 263 (LPPV…SVIP). Low complexity predominate over residues 40–50 (SSSPDQSESSS). A compositionally biased stretch (basic and acidic residues) spans 60-73 (SQDHSHSEQDDSSE). Over residues 85 to 94 (PGSPEQPPPD) the composition is skewed to pro residues. Positions 178–196 (EQTSGQASGADSTDNSSSL) are enriched in polar residues. Residues 244-256 (LPPVTSPLKPNTP) are compositionally biased toward pro residues. Residue Thr-255 is modified to Phosphothreonine. Ser-281, Ser-287, and Ser-302 each carry phosphoserine. Short sequence motifs (NPF) lie at residues 313-315 (NPF) and 329-331 (NPF). Positions 427–560 (GWPMMLRIPE…DLPVLSMDLS (134 aa)) constitute an SHD domain. An MHD domain is found at 568-878 (EEEITVDVRD…SYQVALGSIW (311 aa)). Ser-762 bears the Phosphoserine mark.

Belongs to the Stoned B family. In terms of assembly, interacts with the second C2 domain of synaptotagmins SYT1 and SYT2. Interacts with EPS15, EPS15R and ITSN1. Interacts indirectly with the AP-2 adapter complex. Interacts with TOR1A and COPS4; the interaction controls STON2 protein stability. Post-translationally, phosphorylated in vitro by PKD. In terms of processing, neddylated; deneddylated via its interaction with the COP9 signalosome (CSN) complex through TOR1A and COPS4. Ubiquitinated; leading to its degradation. As to expression, ubiquitous.

The protein localises to the cytoplasm. Its subcellular location is the membrane. It is found in the synapse. It localises to the synaptosome. Functionally, adapter protein involved in endocytic machinery. Involved in the synaptic vesicle recycling. May facilitate clathrin-coated vesicle uncoating. This Homo sapiens (Human) protein is Stonin-2 (STON2).